The following is a 598-amino-acid chain: Elongation factor 4 (598 aa).

A tr-type G domain is found at 2–184 (KNIRNFSIIA…EIVAKIPAPE (183 aa)). Residues 14 to 19 (DHGKST) and 131 to 134 (NKID) each bind GTP.

Belongs to the TRAFAC class translation factor GTPase superfamily. Classic translation factor GTPase family. LepA subfamily.

It is found in the cell inner membrane. The catalysed reaction is GTP + H2O = GDP + phosphate + H(+). Required for accurate and efficient protein synthesis under certain stress conditions. May act as a fidelity factor of the translation reaction, by catalyzing a one-codon backward translocation of tRNAs on improperly translocated ribosomes. Back-translocation proceeds from a post-translocation (POST) complex to a pre-translocation (PRE) complex, thus giving elongation factor G a second chance to translocate the tRNAs correctly. Binds to ribosomes in a GTP-dependent manner. This chain is Elongation factor 4, found in Haemophilus influenzae (strain 86-028NP).